The following is a 100-amino-acid chain: NADH-quinone oxidoreductase subunit K (100 aa).

The next 3 helical transmembrane spans lie at 4-24 (LSHG…SLVM), 28-48 (ILFM…ALVV), and 60-80 (IMYI…LALL).

This sequence belongs to the complex I subunit 4L family. As to quaternary structure, NDH-1 is composed of 13 different subunits. Subunits NuoA, H, J, K, L, M, N constitute the membrane sector of the complex.

It localises to the cell membrane. It carries out the reaction a quinone + NADH + 5 H(+)(in) = a quinol + NAD(+) + 4 H(+)(out). NDH-1 shuttles electrons from NADH, via FMN and iron-sulfur (Fe-S) centers, to quinones in the respiratory chain. The immediate electron acceptor for the enzyme in this species is believed to be ubiquinone. Couples the redox reaction to proton translocation (for every two electrons transferred, four hydrogen ions are translocated across the cytoplasmic membrane), and thus conserves the redox energy in a proton gradient. The protein is NADH-quinone oxidoreductase subunit K of Buchnera aphidicola subsp. Baizongia pistaciae (strain Bp).